Here is a 311-residue protein sequence, read N- to C-terminus: 4-hydroxy-tetrahydrodipicolinate synthase (311 aa).

T51 contributes to the pyruvate binding site. Y140 functions as the Proton donor/acceptor in the catalytic mechanism. K168 serves as the catalytic Schiff-base intermediate with substrate. I209 provides a ligand contact to pyruvate.

The protein belongs to the DapA family. Homotetramer; dimer of dimers.

It is found in the cytoplasm. It carries out the reaction L-aspartate 4-semialdehyde + pyruvate = (2S,4S)-4-hydroxy-2,3,4,5-tetrahydrodipicolinate + H2O + H(+). It functions in the pathway amino-acid biosynthesis; L-lysine biosynthesis via DAP pathway; (S)-tetrahydrodipicolinate from L-aspartate: step 3/4. In terms of biological role, catalyzes the condensation of (S)-aspartate-beta-semialdehyde [(S)-ASA] and pyruvate to 4-hydroxy-tetrahydrodipicolinate (HTPA). The protein is 4-hydroxy-tetrahydrodipicolinate synthase of Streptococcus pneumoniae (strain ATCC BAA-255 / R6).